We begin with the raw amino-acid sequence, 136 residues long: Photosystem II extrinsic protein U (136 aa).

A signal peptide spans 1 to 28 (MKQLAQRLFSLALVLALVLGISVQSAQA).

Belongs to the PsbU family. In terms of assembly, PSII is composed of 1 copy each of membrane proteins PsbA, PsbB, PsbC, PsbD, PsbE, PsbF, PsbH, PsbI, PsbJ, PsbK, PsbL, PsbM, PsbT, PsbX, PsbY, PsbZ, Psb30/Ycf12, peripheral proteins PsbO, CyanoQ (PsbQ), PsbU, PsbV and a large number of cofactors. It forms dimeric complexes.

It localises to the cellular thylakoid membrane. In terms of biological role, one of the extrinsic, lumenal subunits of photosystem II (PSII). PSII is a light-driven water plastoquinone oxidoreductase, using light energy to abstract electrons from H(2)O, generating a proton gradient subsequently used for ATP formation. The extrinsic proteins stabilize the structure of photosystem II oxygen-evolving complex (OEC), the ion environment of oxygen evolution and protect the OEC against heat-induced inactivation. The sequence is that of Photosystem II extrinsic protein U from Synechococcus elongatus (strain ATCC 33912 / PCC 7942 / FACHB-805) (Anacystis nidulans R2).